Here is a 419-residue protein sequence, read N- to C-terminus: Carboxypeptidase A1 (419 aa).

The signal sequence occupies residues 1-16 (MKRLLILSLLLEAVCG). The propeptide at 17 to 110 (NENFVGHQVL…KQQMSAFQAR (94 aa)) is activation peptide. The 294-residue stretch at 121 to 414 (TYHTLDEIYE…LALLTIMDHT (294 aa)) folds into the Peptidase M14 domain. Positions 179 and 182 each coordinate Zn(2+). Substrate contacts are provided by residues 179-182 (HSRE), R237, and 254-255 (NR). C248 and C271 are oxidised to a cystine. Zn(2+) is bound at residue H306. Substrate-binding positions include 307 to 308 (SY) and Y358. E380 serves as the catalytic Proton donor/acceptor.

The protein belongs to the peptidase M14 family. In terms of assembly, monomer. May form a complex with proelastase 2. Requires Zn(2+) as cofactor.

Its subcellular location is the secreted. It carries out the reaction Release of a C-terminal amino acid, but little or no action with -Asp, -Glu, -Arg, -Lys or -Pro.. It catalyses the reaction leukotriene C4 + H2O = leukotriene F4 + glycine. Carboxypeptidase that catalyzes the release of a C-terminal amino acid, but has little or no action with -Asp, -Glu, -Arg, -Lys or -Pro. Catalyzes the conversion of leukotriene C4 to leukotriene F4 via the hydrolysis of an amide bond. The sequence is that of Carboxypeptidase A1 from Rattus norvegicus (Rat).